The chain runs to 198 residues: ATP-dependent Clp protease proteolytic subunit (198 aa).

Serine 103 (nucleophile) is an active-site residue. Histidine 128 is a catalytic residue.

Belongs to the peptidase S14 family. In terms of assembly, fourteen ClpP subunits assemble into 2 heptameric rings which stack back to back to give a disk-like structure with a central cavity, resembling the structure of eukaryotic proteasomes.

The protein localises to the cytoplasm. The enzyme catalyses Hydrolysis of proteins to small peptides in the presence of ATP and magnesium. alpha-casein is the usual test substrate. In the absence of ATP, only oligopeptides shorter than five residues are hydrolyzed (such as succinyl-Leu-Tyr-|-NHMec, and Leu-Tyr-Leu-|-Tyr-Trp, in which cleavage of the -Tyr-|-Leu- and -Tyr-|-Trp bonds also occurs).. Its function is as follows. Cleaves peptides in various proteins in a process that requires ATP hydrolysis. Has a chymotrypsin-like activity. Plays a major role in the degradation of misfolded proteins. This Vesicomyosocius okutanii subsp. Calyptogena okutanii (strain HA) protein is ATP-dependent Clp protease proteolytic subunit.